The sequence spans 366 residues: MAP kinase-activated protein kinase 2 (366 aa).

The region spanning 30-291 (KVTSQVLGLG…ITEFMNHPWI (262 aa)) is the Protein kinase domain. ATP is bound by residues 36–44 (LGLGINGKV) and Lys59. 105–107 (ECL) contacts staurosporine. Catalysis depends on Asp152, which acts as the Proton acceptor. Thr188 carries the post-translational modification Phosphothreonine; by MAPK14. Phosphoserine; by MAPK14 is present on Ser238. Phosphoserine; by autocatalysis is present on Ser294. Residues 294–330 (STKVPQTPLHTSRVLKEDKERWEDVKEEMTSALATMR) form an autoinhibitory helix region. Thr300 carries the post-translational modification Phosphothreonine; by MAPK14. Residue Lys319 forms a Glycyl lysine isopeptide (Lys-Gly) (interchain with G-Cter in SUMO) linkage. Positions 322–331 (MTSALATMRV) match the Nuclear export signal (NES) motif. The tract at residues 332–356 (DYEQIKIKKIEDASNPLLLKRRKKA) is p38 MAPK-binding site. 2 consecutive short sequence motifs (bipartite nuclear localization signal) follow at residues 337 to 340 (KIKK) and 351 to 355 (KRRKK).

This sequence belongs to the protein kinase superfamily. CAMK Ser/Thr protein kinase family. In terms of assembly, heterodimer with p38-alpha/MAPK14; this heterodimer forms a stable complex: molecules are positioned 'face to face' so that the ATP-binding sites of both kinases are at the heterodimer interface. Interacts with PHC2. Interacts with HSF1. Post-translationally, sumoylation inhibits the protein kinase activity. In terms of processing, phosphorylated and activated by MAP kinase p38-alpha/MAPK14 at Thr-188, Ser-238 and Thr-300.

Its subcellular location is the cytoplasm. It localises to the nucleus. The enzyme catalyses L-seryl-[protein] + ATP = O-phospho-L-seryl-[protein] + ADP + H(+). It carries out the reaction L-threonyl-[protein] + ATP = O-phospho-L-threonyl-[protein] + ADP + H(+). With respect to regulation, activated following phosphorylation by p38-alpha/MAPK14 following various stresses. Inhibited following sumoylation. Specifically inhibited by pyrrolopyridine inhibitors. In terms of biological role, stress-activated serine/threonine-protein kinase involved in cytokine production, endocytosis, reorganization of the cytoskeleton, cell migration, cell cycle control, chromatin remodeling, DNA damage response and transcriptional regulation. Following stress, it is phosphorylated and activated by MAP kinase p38-alpha/MAPK14, leading to phosphorylation of substrates. Phosphorylates serine in the peptide sequence, Hyd-X-R-X(2)-S, where Hyd is a large hydrophobic residue. Phosphorylates ALOX5, CDC25B, CDC25C, CEP131, ELAVL1, HNRNPA0, HSP27/HSPB1, KRT18, KRT20, LIMK1, LSP1, PABPC1, PARN, PDE4A, RCSD1, RPS6KA3, TAB3 and TTP/ZFP36. Phosphorylates HSF1; leading to the interaction with HSP90 proteins and inhibiting HSF1 homotrimerization, DNA-binding and transactivation activities. Mediates phosphorylation of HSP27/HSPB1 in response to stress, leading to dissociation of HSP27/HSPB1 from large small heat-shock protein (sHsps) oligomers and impairment of their chaperone activities and ability to protect against oxidative stress effectively. Involved in inflammatory response by regulating tumor necrosis factor (TNF) and IL6 production post-transcriptionally: acts by phosphorylating AU-rich elements (AREs)-binding proteins ELAVL1, HNRNPA0, PABPC1 and TTP/ZFP36, leading to regulate the stability and translation of TNF and IL6 mRNAs. Phosphorylation of TTP/ZFP36, a major post-transcriptional regulator of TNF, promotes its binding to 14-3-3 proteins and reduces its ARE mRNA affinity leading to inhibition of dependent degradation of ARE-containing transcripts. Phosphorylates CEP131 in response to cellular stress following ultraviolet irradiation which promotes binding of CEP131 to 14-3-3 proteins and inhibits formation of novel centriolar satellites. Also involved in late G2/M checkpoint following DNA damage through a process of post-transcriptional mRNA stabilization: following DNA damage, relocalizes from nucleus to cytoplasm and phosphorylates HNRNPA0 and PARN, leading to stabilization of GADD45A mRNA. Involved in toll-like receptor signaling pathway (TLR) in dendritic cells: required for acute TLR-induced macropinocytosis by phosphorylating and activating RPS6KA3. The chain is MAP kinase-activated protein kinase 2 (MAPKAPK2) from Oryctolagus cuniculus (Rabbit).